A 394-amino-acid chain; its full sequence is Chorismate synthase (394 aa).

Residues R42 and R48 each coordinate NADP(+). FMN-binding positions include 137–139 (RAS), 258–259 (QA), G302, 317–321 (KPIAT), and R343.

This sequence belongs to the chorismate synthase family. Homotetramer. FMNH2 serves as cofactor.

The enzyme catalyses 5-O-(1-carboxyvinyl)-3-phosphoshikimate = chorismate + phosphate. Its pathway is metabolic intermediate biosynthesis; chorismate biosynthesis; chorismate from D-erythrose 4-phosphate and phosphoenolpyruvate: step 7/7. Catalyzes the anti-1,4-elimination of the C-3 phosphate and the C-6 proR hydrogen from 5-enolpyruvylshikimate-3-phosphate (EPSP) to yield chorismate, which is the branch point compound that serves as the starting substrate for the three terminal pathways of aromatic amino acid biosynthesis. This reaction introduces a second double bond into the aromatic ring system. The polypeptide is Chorismate synthase (Streptomyces coelicolor (strain ATCC BAA-471 / A3(2) / M145)).